The sequence spans 685 residues: ATP-dependent permease MDL1 (685 aa).

Over residues 48 to 70 (FNSKSSTAPNTEANSNGSTNSQS) the composition is skewed to polar residues. A disordered region spans residues 48–76 (FNSKSSTAPNTEANSNGSTNSQSDTKKPR). The N-linked (GlcNAc...) asparagine glycan is linked to asparagine 63. A helical transmembrane segment spans residues 96 to 116 (LIFFALICLVTTSATSMALPL). The 311-residue stretch at 97 to 407 (IFFALICLVT…LGNFYTELMK (311 aa)) folds into the ABC transmembrane type-1 domain. Residues 125–147 (TKKDDDDDKDNDNDDKDDTQPSD) are disordered. Acidic residues predominate over residues 129 to 141 (DDDDKDNDNDDKD). Residues 158 to 180 (FYSALGVLFIVSASTNFGRIYLL) form a helical membrane-spanning segment. Asparagine 239 carries N-linked (GlcNAc...) asparagine glycosylation. A helical membrane pass occupies residues 266–282 (LCMSLIFPPLITMSWFY). N-linked (GlcNAc...) asparagine glycosylation occurs at asparagine 336. Transmembrane regions (helical) follow at residues 353 to 373 (GFIG…LIGA) and 381 to 401 (LSSF…LGNF). Residues 440–680 (IEFKGIDFTY…PNSQFNKLLK (241 aa)) form the ABC transporter domain. 475–482 (GPSGSGKS) contacts ATP. N-linked (GlcNAc...) asparagine glycans are attached at residues asparagine 553 and asparagine 576.

This sequence belongs to the ABC transporter superfamily. ABCB family. Mitochondrial peptide exporter (TC 3.A.1.212) subfamily.

The protein localises to the membrane. This Candida albicans (Yeast) protein is ATP-dependent permease MDL1 (MDL1).